The sequence spans 828 residues: Potassium channel SKOR (828 aa).

The Cytoplasmic segment spans residues 1-86 (MGGSSGGGVS…PDNRWYKAWT (86 aa)). A helical transmembrane segment spans residues 87–107 (MFILIWALYSSFFTPLEFGFF). Topologically, residues 108-114 (RGLPENL) are extracellular. The helical transmembrane segment at 115–135 (FILDIAGQIAFLVDIVLTFFV) threads the bilayer. The Cytoplasmic portion of the chain corresponds to 136-158 (AYRDSRTYRMIYKRSSIALRYLK). The helical transmembrane segment at 159–179 (STFIIDLLACMPWDIIYKAAG) threads the bilayer. Over 180 to 185 (EKEEVR) the chain is Extracellular. Residues 186–206 (YLLLIRLYRVHRVILFFHKME) traverse the membrane as a helical; Voltage-sensor segment. The Cytoplasmic portion of the chain corresponds to 207 to 220 (KDIRINYLFTRIVK). A helical membrane pass occupies residues 221–241 (LIFVELYCTHTAACIFYYLAT). Residues 242-276 (TLPASQEGYTWIGSLKLGDYSYSKFREIDLWTRYT) lie on the Extracellular side of the membrane. The segment at residues 277 to 296 (TSMYFAVVTMATVGYGDIHA) is an intramembrane region (pore-forming). The Extracellular segment spans residues 297 to 300 (VNMR). A helical membrane pass occupies residues 301–321 (EMIFAMVYISFDMILGAYLIG). The Cytoplasmic portion of the chain corresponds to 322–828 (NMTALIVKGS…GQKLYLAVET (507 aa)). 403-523 (LFRGCSSEFI…RRILNNLLEG (121 aa)) serves as a coordination point for a nucleoside 3',5'-cyclic phosphate. 6 ANK repeats span residues 545 to 576 (EAEL…DPNK), 580 to 609 (DGRS…DVNI), 613 to 642 (LGST…TLNI), 644 to 673 (NAGT…DPNS), 677 to 706 (DHRT…NVLA), and 710 to 740 (WGNT…QISS). The KHA domain occupies 756 to 828 (KCTVYFSHPG…GQKLYLAVET (73 aa)).

Belongs to the potassium channel family. Plant (TC 1.A.1.4) subfamily. In terms of assembly, the potassium channel is probably composed of a homo- or heterotetrameric complex of pore-forming subunits. As to expression, expressed in root pericycle and xylem parenchyma, and in flower at a lower level.

It localises to the membrane. Its function is as follows. Highly selective outward-rectifying potassium channel. Involved in potassium release into the xylem sap toward the shoots. Assuming opened or closed conformations in response to the voltage difference across the membrane, the channel is activated by depolarization. The voltage-dependence of the channel is abolished by internal or external acidification. May interact with the cytoskeleton or with regulatory proteins. This chain is Potassium channel SKOR (SKOR), found in Arabidopsis thaliana (Mouse-ear cress).